A 130-amino-acid chain; its full sequence is Small ribosomal subunit protein uS9 (130 aa).

Belongs to the universal ribosomal protein uS9 family.

The sequence is that of Small ribosomal subunit protein uS9 from Histophilus somni (strain 129Pt) (Haemophilus somnus).